The following is a 99-amino-acid chain: PqqA binding protein (99 aa).

This sequence belongs to the PqqD family. In terms of assembly, monomer. Interacts with PqqE.

It functions in the pathway cofactor biosynthesis; pyrroloquinoline quinone biosynthesis. Its function is as follows. Functions as a PqqA binding protein and presents PqqA to PqqE, in the pyrroloquinoline quinone (PQQ) biosynthetic pathway. In Acinetobacter baylyi (strain ATCC 33305 / BD413 / ADP1), this protein is PqqA binding protein.